The following is a 407-amino-acid chain: Carbamoyl phosphate synthase small chain (407 aa).

A CPSase region spans residues 1–203; it reads MSQNESGTIA…EPCGEYEGKE (203 aa). The L-glutamine site is built by serine 61, glycine 255, and glycine 257. One can recognise a Glutamine amidotransferase type-1 domain in the interval 207–405; sequence TVAAVDLGIK…CELMKNNSKE (199 aa). Catalysis depends on cysteine 283, which acts as the Nucleophile. L-glutamine is bound by residues phenylalanine 284, glutamine 287, asparagine 325, glycine 327, and phenylalanine 328. Residues histidine 378 and glutamate 380 contribute to the active site.

The protein belongs to the CarA family. In terms of assembly, composed of two chains; the small (or glutamine) chain promotes the hydrolysis of glutamine to ammonia, which is used by the large (or ammonia) chain to synthesize carbamoyl phosphate. Tetramer of heterodimers (alpha,beta)4.

It catalyses the reaction hydrogencarbonate + L-glutamine + 2 ATP + H2O = carbamoyl phosphate + L-glutamate + 2 ADP + phosphate + 2 H(+). The enzyme catalyses L-glutamine + H2O = L-glutamate + NH4(+). It functions in the pathway amino-acid biosynthesis; L-arginine biosynthesis; carbamoyl phosphate from bicarbonate: step 1/1. The protein operates within pyrimidine metabolism; UMP biosynthesis via de novo pathway; (S)-dihydroorotate from bicarbonate: step 1/3. In terms of biological role, small subunit of the glutamine-dependent carbamoyl phosphate synthetase (CPSase). CPSase catalyzes the formation of carbamoyl phosphate from the ammonia moiety of glutamine, carbonate, and phosphate donated by ATP, constituting the first step of 2 biosynthetic pathways, one leading to arginine and/or urea and the other to pyrimidine nucleotides. The small subunit (glutamine amidotransferase) binds and cleaves glutamine to supply the large subunit with the substrate ammonia. This chain is Carbamoyl phosphate synthase small chain, found in Bifidobacterium longum (strain DJO10A).